A 447-amino-acid chain; its full sequence is Phosphoglucosamine mutase (447 aa).

Ser107 acts as the Phosphoserine intermediate in catalysis. Residues Ser107, Asp246, Asp248, and Asp250 each contribute to the Mg(2+) site. Ser107 is subject to Phosphoserine.

It belongs to the phosphohexose mutase family. Requires Mg(2+) as cofactor. Activated by phosphorylation.

It catalyses the reaction alpha-D-glucosamine 1-phosphate = D-glucosamine 6-phosphate. Its function is as follows. Catalyzes the conversion of glucosamine-6-phosphate to glucosamine-1-phosphate. This is Phosphoglucosamine mutase from Ralstonia nicotianae (strain ATCC BAA-1114 / GMI1000) (Ralstonia solanacearum).